We begin with the raw amino-acid sequence, 79 residues long: Small ribosomal subunit protein bS16 (79 aa).

This sequence belongs to the bacterial ribosomal protein bS16 family.

This Desulfovibrio desulfuricans (strain ATCC 27774 / DSM 6949 / MB) protein is Small ribosomal subunit protein bS16.